Here is a 251-residue protein sequence, read N- to C-terminus: N-acetylmuramoyl-L-alanine amidase CwlA (251 aa).

Positions 1–37 are cleaved as a signal peptide; sequence MEIKQMLVPVSRYSVLCPYEMNPTEITFHNTYNDAPA. The N-acetylmuramoyl-L-alanine amidase domain maps to 38–140; the sequence is INERNNVANN…QERNGKYCPH (103 aa).

The protein belongs to the N-acetylmuramoyl-L-alanine amidase 2 family.

It localises to the secreted. It catalyses the reaction Hydrolyzes the link between N-acetylmuramoyl residues and L-amino acid residues in certain cell-wall glycopeptides.. Autolysins are involved in some important biological processes such as cell separation, cell-wall turnover, competence for genetic transformation, formation of the flagella and sporulation. This is N-acetylmuramoyl-L-alanine amidase CwlA (cwlA) from Bacillus sp.